The chain runs to 335 residues: Peflin (335 aa).

Over residues 23–37 (AMEETRREFEKEKQR) the composition is skewed to basic and acidic residues. A disordered region spans residues 23–92 (AMEETRREFE…SPRHTKTPVD (70 aa)). Residues 43–53 (VTQAQTPNTRV) are compositionally biased toward polar residues. EF-hand domains are found at residues 144 to 192 (KVAP…DDNS), 198 to 223 (SVDA…IALY), 224 to 259 (KRVK…LGYL), 260 to 300 (IPFE…LMRL), and 301 to 332 (TKLF…LGRF). Positions 170, 176, and 181 each coordinate Ca(2+). The Ca(2+) site is built by Asp237, Asn239, Ser241, Thr243, and Glu248.

In terms of assembly, homodimer.

The protein resides in the cytoplasm. The protein localises to the nucleus. It localises to the bud tip. Its subcellular location is the bud neck. Functionally, calcium-binding protein that is required for polar bud growth and cell wall abscission. Can also bind zinc ions. The protein is Peflin (PEF1) of Saccharomyces cerevisiae (strain ATCC 204508 / S288c) (Baker's yeast).